The primary structure comprises 94 residues: Selenoprotein K (94 aa).

A helical membrane pass occupies residues 20 to 42; it reads LSFLTDFFWGAVEFIGLFFQTLV. Residues 48-94 are disordered; that stretch reads KDGNNSASSRFSDGRGPPGFPGRRRMGRINHGAGPTPPPMGGGGUGR. Residues 49–58 are compositionally biased toward polar residues; that stretch reads DGNNSASSRF. Sec92 is a non-standard amino acid (selenocysteine).

It belongs to the selenoprotein K family.

It is found in the endoplasmic reticulum membrane. The protein localises to the cell membrane. Functionally, required for Ca(2+) flux in immune cells and plays a role in T-cell proliferation and in T-cell and neutrophil migration. Involved in endoplasmic reticulum-associated degradation (ERAD) of soluble glycosylated proteins. Required for cell surface expression of CD36 and involved in macrophage uptake of low-density lipoprotein and in foam cell formation. Required for palmitoylation. This chain is Selenoprotein K (selenok), found in Danio rerio (Zebrafish).